The chain runs to 600 residues: Chaperonin 60 subunit beta 1, chloroplastic (600 aa).

Over residues 1–12 (MASTFTATSSIG) the composition is skewed to polar residues. A disordered region spans residues 1-23 (MASTFTATSSIGSMVAPNGHKSD). Residues 1–54 (MASTFTATSSIGSMVAPNGHKSDKKLISKLSSSSFGRRQSVCPRPRRSSSAIVC) constitute a chloroplast transit peptide. Phosphoserine is present on residues Ser101 and Ser478.

Belongs to the chaperonin (HSP60) family. In terms of assembly, part of the Cpn60 complex composed of 7 alpha and 7 beta subunits. Can also form a complex composed of 14 beta subunits only. Both complexes show ATPase activity. The Cpn60 complex interacts with the Cpn10 complex. Interacts with RAB during heat stress. In terms of tissue distribution, expressed in leaves, stems, petioles and flowers.

The protein localises to the plastid. It localises to the chloroplast stroma. Its function is as follows. Binds RuBisCO small and large subunits and is implicated in the assembly of the enzyme oligomer. Involved in protein assisted folding. Required for proper plastid division. The protein is Chaperonin 60 subunit beta 1, chloroplastic (CPN60B1) of Arabidopsis thaliana (Mouse-ear cress).